The primary structure comprises 160 residues: MTAENGAQGAVSPSLNILAQYIKDLSFENPGAPRSLQGRENAPAININVNVNANPISGSDFDVVLTLNAEAKDGDKILFAAELVYGGVFRIAGFPQEHMLPVLFIECPRLLFPFARQIIADVTRNGGFPPLMIDPIDFSQMFAQRVAEEQAKAQVQAVPN.

Belongs to the SecB family. Homotetramer, a dimer of dimers. One homotetramer interacts with 1 SecA dimer.

It is found in the cytoplasm. Functionally, one of the proteins required for the normal export of preproteins out of the cell cytoplasm. It is a molecular chaperone that binds to a subset of precursor proteins, maintaining them in a translocation-competent state. It also specifically binds to its receptor SecA. This is Protein-export protein SecB from Agrobacterium fabrum (strain C58 / ATCC 33970) (Agrobacterium tumefaciens (strain C58)).